A 202-amino-acid chain; its full sequence is Imidazole glycerol phosphate synthase subunit HisH 2 (202 aa).

Residues 1–202 (MIVVIDYGVG…QLFKNFVELV (202 aa)) enclose the Glutamine amidotransferase type-1 domain. C80 functions as the Nucleophile in the catalytic mechanism. Residues H183 and E185 contribute to the active site.

As to quaternary structure, heterodimer of HisH and HisF.

Its subcellular location is the cytoplasm. The catalysed reaction is 5-[(5-phospho-1-deoxy-D-ribulos-1-ylimino)methylamino]-1-(5-phospho-beta-D-ribosyl)imidazole-4-carboxamide + L-glutamine = D-erythro-1-(imidazol-4-yl)glycerol 3-phosphate + 5-amino-1-(5-phospho-beta-D-ribosyl)imidazole-4-carboxamide + L-glutamate + H(+). The enzyme catalyses L-glutamine + H2O = L-glutamate + NH4(+). It functions in the pathway amino-acid biosynthesis; L-histidine biosynthesis; L-histidine from 5-phospho-alpha-D-ribose 1-diphosphate: step 5/9. Functionally, IGPS catalyzes the conversion of PRFAR and glutamine to IGP, AICAR and glutamate. The HisH subunit catalyzes the hydrolysis of glutamine to glutamate and ammonia as part of the synthesis of IGP and AICAR. The resulting ammonia molecule is channeled to the active site of HisF. In Pseudomonas aeruginosa (strain ATCC 15692 / DSM 22644 / CIP 104116 / JCM 14847 / LMG 12228 / 1C / PRS 101 / PAO1), this protein is Imidazole glycerol phosphate synthase subunit HisH 2 (hisH2).